We begin with the raw amino-acid sequence, 2324 residues long: Acetyl-CoA carboxylase (2324 aa).

Met1 bears the N-acetylmethionine mark. Residues Met1–Ser34 are disordered. Phosphoserine occurs at positions 78 and 80. Residues Val117–Ala618 form the Biotin carboxylation domain. The ATP-grasp domain maps to Gln275–Met466. Gly315–Gly320 is a binding site for ATP. Mn(2+) contacts are provided by Glu424, Glu437, and Asn439. Arg441 is an active-site residue. The region spanning Phe745 to Gln819 is the Biotinyl-binding domain. An N6-biotinyllysine modification is found at Lys786. Ser1193 carries the phosphoserine modification. One can recognise a CoA carboxyltransferase N-terminal domain in the interval Pro1553–Lys1891. The tract at residues Pro1553–Asp2211 is carboxyltransferase. CoA contacts are provided by Arg1800, Lys2104, and Arg2106. Residues Pro1895–Asp2211 form the CoA carboxyltransferase C-terminal domain.

Biotin is required as a cofactor. It depends on Mn(2+) as a cofactor.

It is found in the cytoplasm. It catalyses the reaction hydrogencarbonate + acetyl-CoA + ATP = malonyl-CoA + ADP + phosphate + H(+). It carries out the reaction N(6)-biotinyl-L-lysyl-[protein] + hydrogencarbonate + ATP = N(6)-carboxybiotinyl-L-lysyl-[protein] + ADP + phosphate + H(+). Its pathway is lipid metabolism; malonyl-CoA biosynthesis; malonyl-CoA from acetyl-CoA: step 1/1. With respect to regulation, by phosphorylation. Functionally, catalyzes the rate-limiting reaction in the biogenesis of long-chain fatty acids. Carries out three functions: biotin carboxyl carrier protein, biotin carboxylase and carboxyltransferase. The protein is Acetyl-CoA carboxylase (ACAC) of Gallus gallus (Chicken).